A 346-amino-acid chain; its full sequence is Biotin synthase (346 aa).

One can recognise a Radical SAM core domain in the interval 36-265 (YFGRQVMLHR…KAEIRIGGGR (230 aa)). 3 residues coordinate [4Fe-4S] cluster: C54, C58, and C61. [2Fe-2S] cluster contacts are provided by C98, C130, C190, and R260.

This sequence belongs to the radical SAM superfamily. Biotin synthase family. As to quaternary structure, homodimer. It depends on [4Fe-4S] cluster as a cofactor. Requires [2Fe-2S] cluster as cofactor.

The enzyme catalyses (4R,5S)-dethiobiotin + (sulfur carrier)-SH + 2 reduced [2Fe-2S]-[ferredoxin] + 2 S-adenosyl-L-methionine = (sulfur carrier)-H + biotin + 2 5'-deoxyadenosine + 2 L-methionine + 2 oxidized [2Fe-2S]-[ferredoxin]. It participates in cofactor biosynthesis; biotin biosynthesis; biotin from 7,8-diaminononanoate: step 2/2. Functionally, catalyzes the conversion of dethiobiotin (DTB) to biotin by the insertion of a sulfur atom into dethiobiotin via a radical-based mechanism. In Acaryochloris marina (strain MBIC 11017), this protein is Biotin synthase.